We begin with the raw amino-acid sequence, 970 residues long: Transcriptional activator protein DAL81 (970 aa).

3 disordered regions span residues 1–44 (MDPH…NHDI), 64–95 (NILR…QQQS), and 118–140 (DNVS…NNDI). Low complexity-rich tracts occupy residues 15–41 (TKSV…NNSN), 73–94 (QQQQ…QQQQ), and 121–140 (SNSA…NNDI). The segment at residues 150-179 (CNQCRLKKTKCNYFPDLGNCLECETSRTKC) is a DNA-binding region (zn(2)-C6 fungal-type). Over residues 807–823 (SFPNGTTSTTTPVNPTS) the composition is skewed to low complexity. A disordered region spans residues 807–970 (SFPNGTTSTT…VTINTRETPL (164 aa)). 2 stretches are compositionally biased toward polar residues: residues 824-836 (RQTQ…SPAI) and 858-870 (KTSQ…TPSH). Position 833 is a phosphoserine (S833). A compositionally biased stretch (low complexity) spans 875–894 (PPSNTSSPRVNSSTNVNSNT). A compositionally biased stretch (polar residues) spans 895–906 (QMNASPLTSINE). The segment covering 907–938 (TRQESGDAADEKTAGRERTANEESSTELKDDN) has biased composition (basic and acidic residues). Composition is skewed to polar residues over residues 939 to 954 (PNSN…QTIK) and 961 to 970 (VTINTRETPL).

It is found in the nucleus. In terms of biological role, positive regulation of genes required for catabolism of GABA (UGA4, UGA1, and UGA2), urea (DUR1 and DUR2), arginine and allantoin. The chain is Transcriptional activator protein DAL81 (DAL81) from Saccharomyces cerevisiae (strain ATCC 204508 / S288c) (Baker's yeast).